Consider the following 170-residue polypeptide: Thioredoxin-like protein YneN (170 aa).

The helical transmembrane segment at 5–23 (WLAGILLIMLVGYTGWNLY) threads the bilayer. The Thioredoxin domain occupies 33–170 (IQEGQQAPDF…KEMEQKLDLD (138 aa)). The cysteines at positions 71 and 74 are disulfide-linked.

Belongs to the thioredoxin family.

It is found in the cell membrane. The chain is Thioredoxin-like protein YneN (yneN) from Bacillus subtilis (strain 168).